The chain runs to 370 residues: D-alanine--D-alanine ligase (370 aa).

One can recognise an ATP-grasp domain in the interval 144–352 (KKIFADAGIP…YGALIERLVD (209 aa)). 177–232 (EEVLTYPVFVKPANLGSSVGISKATNKKELVDAMTEAFLYDRRVVVEQGVVAREIE) provides a ligand contact to ATP. Mg(2+) is bound by residues aspartate 306, glutamate 319, and asparagine 321.

The protein belongs to the D-alanine--D-alanine ligase family. Mg(2+) is required as a cofactor. It depends on Mn(2+) as a cofactor.

It localises to the cytoplasm. It carries out the reaction 2 D-alanine + ATP = D-alanyl-D-alanine + ADP + phosphate + H(+). Its pathway is cell wall biogenesis; peptidoglycan biosynthesis. Functionally, cell wall formation. The protein is D-alanine--D-alanine ligase of Listeria monocytogenes serovar 1/2a (strain ATCC BAA-679 / EGD-e).